We begin with the raw amino-acid sequence, 1568 residues long: Myosin-2 (1568 aa).

Positions 4–57 (EVGTRCWYPHKELGWIGAEVIKNEVKDGKYHLELSLEDDEVVSVDTEDLNDDKN) constitute a Myosin N-terminal SH3-like domain. In terms of domain architecture, Myosin motor spans 70 to 783 (EATEDLTSLS…MLAYLEKLRS (714 aa)). An ATP-binding site is contributed by 164–171 (GESGAGKT). Positions 443–523 (FIGVLDIYGF…LGILSLLDEE (81 aa)) are actin-binding. The tract at residues 619–641 (KKAELEQNNPGNKKPGPARTVNR) is disordered. 6 consecutive IQ domains span residues 786–808 (MHNS…QYLK), 809–833 (ISQA…YHEM), 834–856 (KVHS…NVFN), 857–881 (VLIT…KREH), 882–904 (EYNA…TFLN), and 905–934 (TKRD…DAKS). Residues 944 to 1088 (KLENKVIELT…ISRLQTAMSL (145 aa)) adopt a coiled-coil conformation. The tract at residues 1089–1568 (GTVTTSVLPQ…VAQQVVQDGH (480 aa)) is non alpha-helical, tail domain. Residues 1223–1498 (AQVLTTIQKV…LRYVADIVKK (276 aa)) enclose the Dilute domain.

It belongs to the TRAFAC class myosin-kinesin ATPase superfamily. Myosin family. In terms of assembly, homodimer. Interacts with calmodulin (CMD1) and the myosin light chain MLC1 through its IQ repeats.

Functionally, myosin heavy chain that is required for the cell cycle-regulated transport of various organelles and proteins for their segregation. Functions by binding with its tail domain to receptor proteins on organelles and exerting force with its N-terminal motor domain against actin filaments, thereby transporting its cargo along polarized actin cables. The chain is Myosin-2 (MYO2) from Saccharomyces uvarum (strain ATCC 76518 / CBS 7001 / CLIB 283 / NBRC 10550 / MCYC 623 / NCYC 2669 / NRRL Y-11845) (Yeast).